The primary structure comprises 334 residues: 5-formaminoimidazole-4-carboxamide-1-(beta)-D-ribofuranosyl 5'-monophosphate synthetase (334 aa).

Ser-10, His-11, Ser-71, and His-75 together coordinate 5-amino-1-(5-phospho-beta-D-ribosyl)imidazole-4-carboxamide. Positions 78-325 (IELVENMKVP…IAMEIREAIE (248 aa)) constitute an ATP-grasp domain. Residues 132 to 142 (KPHGAKGGKGY), 173 to 176 (QEYV), and Glu-204 contribute to the ATP site. Asn-232 provides a ligand contact to 5-amino-1-(5-phospho-beta-D-ribosyl)imidazole-4-carboxamide. Mg(2+)-binding residues include Glu-270 and Glu-283.

This sequence belongs to the phosphohexose mutase family. Homotrimer and homohexamer. Mg(2+) serves as cofactor. Mn(2+) is required as a cofactor.

The enzyme catalyses 5-amino-1-(5-phospho-beta-D-ribosyl)imidazole-4-carboxamide + formate + ATP = 5-formamido-1-(5-phospho-D-ribosyl)imidazole-4-carboxamide + ADP + phosphate. Its pathway is purine metabolism; IMP biosynthesis via de novo pathway; 5-formamido-1-(5-phospho-D-ribosyl)imidazole-4-carboxamide from 5-amino-1-(5-phospho-D-ribosyl)imidazole-4-carboxamide (formate route): step 1/1. Functionally, catalyzes the ATP- and formate-dependent formylation of 5-aminoimidazole-4-carboxamide-1-beta-d-ribofuranosyl 5'-monophosphate (AICAR) to 5-formaminoimidazole-4-carboxamide-1-beta-d-ribofuranosyl 5'-monophosphate (FAICAR) in the absence of folates. The polypeptide is 5-formaminoimidazole-4-carboxamide-1-(beta)-D-ribofuranosyl 5'-monophosphate synthetase (Pyrococcus furiosus (strain ATCC 43587 / DSM 3638 / JCM 8422 / Vc1)).